The following is a 510-amino-acid chain: NAD(P)H-quinone oxidoreductase subunit 2 B, chloroplastic (510 aa).

Helical transmembrane passes span 24 to 44 (LLLF…GLIL), 57 to 77 (IPWL…ALLF), 99 to 119 (IFQF…VEYI), 124 to 144 (MAIT…MFLC), 150 to 170 (ITIF…SGYT), 183 to 203 (YLLM…WLYG), 229 to 249 (ISIA…PAPF), 295 to 315 (WHLL…LIAI), 323 to 343 (MLAY…IVGD), 354 to 374 (YMLF…LFGL), 395 to 415 (ALSS…AGFF), 418 to 438 (LHLF…IGLL), and 484 to 504 (MIVC…IIAI).

It belongs to the complex I subunit 2 family. NDH is composed of at least 16 different subunits, 5 of which are encoded in the nucleus.

The protein localises to the plastid. The protein resides in the chloroplast thylakoid membrane. The catalysed reaction is a plastoquinone + NADH + (n+1) H(+)(in) = a plastoquinol + NAD(+) + n H(+)(out). The enzyme catalyses a plastoquinone + NADPH + (n+1) H(+)(in) = a plastoquinol + NADP(+) + n H(+)(out). In terms of biological role, NDH shuttles electrons from NAD(P)H:plastoquinone, via FMN and iron-sulfur (Fe-S) centers, to quinones in the photosynthetic chain and possibly in a chloroplast respiratory chain. The immediate electron acceptor for the enzyme in this species is believed to be plastoquinone. Couples the redox reaction to proton translocation, and thus conserves the redox energy in a proton gradient. This is NAD(P)H-quinone oxidoreductase subunit 2 B, chloroplastic from Drimys granadensis.